The primary structure comprises 185 residues: Ribosome-recycling factor (185 aa).

This sequence belongs to the RRF family.

Its subcellular location is the cytoplasm. Its function is as follows. Responsible for the release of ribosomes from messenger RNA at the termination of protein biosynthesis. May increase the efficiency of translation by recycling ribosomes from one round of translation to another. This is Ribosome-recycling factor from Shewanella loihica (strain ATCC BAA-1088 / PV-4).